A 318-amino-acid chain; its full sequence is MAKPGRTPAKGAGTSARILHDGLVIASHGRHCLVETPTGERLICHPRGKKSQAVVGDRVRWQASEDEGTIEEVVPRRNLFYRQDEIRTKSFAANLDHVLILIAAEPEFSEHQLARALIAAEAERITPIIALNKSDLAEPFERAWNKLAPYRRMHHGVLPLSLKASGEADYASLMKLLAGKSTLVLGPSGAGKSTLINLLVPGATALTGEISQALNSGKHTTTSTTWYWVDEARTTSLIDSPGFQEFGLNHIAPMQLAGLMPDIAEHANDCKFYNCTHLHEPGCGVIANVDAPGKPGPISATRYRIYGELFAELSQSRY.

A CP-type G domain is found at 82-246 (RQDEIRTKSF…LIDSPGFQEF (165 aa)). Residues 132 to 135 (NKSD) and 186 to 194 (GPSGAGKST) contribute to the GTP site. The Zn(2+) site is built by Cys270, Cys275, His277, and Cys283.

This sequence belongs to the TRAFAC class YlqF/YawG GTPase family. RsgA subfamily. In terms of assembly, monomer. Associates with 30S ribosomal subunit, binds 16S rRNA. It depends on Zn(2+) as a cofactor.

The protein localises to the cytoplasm. Functionally, one of several proteins that assist in the late maturation steps of the functional core of the 30S ribosomal subunit. Helps release RbfA from mature subunits. May play a role in the assembly of ribosomal proteins into the subunit. Circularly permuted GTPase that catalyzes slow GTP hydrolysis, GTPase activity is stimulated by the 30S ribosomal subunit. The protein is Small ribosomal subunit biogenesis GTPase RsgA of Variovorax paradoxus (strain S110).